The chain runs to 187 residues: Holliday junction branch migration complex subunit RuvA (187 aa).

Residues 1 to 64 (MIEYIRGIIE…EDGFQIFGFK (64 aa)) are domain I. A domain II region spans residues 65-136 (RKEELELFEK…ELKDKVPKEV (72 aa)). Residues 136–139 (VVVP) are flexible linker. Residues 140–187 (KEDSLLNEALEALLALGYTKSEAIYALSDVNCESVEQAVKEALKKLAK) form a domain III region.

The protein belongs to the RuvA family. In terms of assembly, homotetramer. Forms an RuvA(8)-RuvB(12)-Holliday junction (HJ) complex. HJ DNA is sandwiched between 2 RuvA tetramers; dsDNA enters through RuvA and exits via RuvB. An RuvB hexamer assembles on each DNA strand where it exits the tetramer. Each RuvB hexamer is contacted by two RuvA subunits (via domain III) on 2 adjacent RuvB subunits; this complex drives branch migration. In the full resolvosome a probable DNA-RuvA(4)-RuvB(12)-RuvC(2) complex forms which resolves the HJ.

It localises to the cytoplasm. In terms of biological role, the RuvA-RuvB-RuvC complex processes Holliday junction (HJ) DNA during genetic recombination and DNA repair, while the RuvA-RuvB complex plays an important role in the rescue of blocked DNA replication forks via replication fork reversal (RFR). RuvA specifically binds to HJ cruciform DNA, conferring on it an open structure. The RuvB hexamer acts as an ATP-dependent pump, pulling dsDNA into and through the RuvAB complex. HJ branch migration allows RuvC to scan DNA until it finds its consensus sequence, where it cleaves and resolves the cruciform DNA. The sequence is that of Holliday junction branch migration complex subunit RuvA from Caldanaerobacter subterraneus subsp. tengcongensis (strain DSM 15242 / JCM 11007 / NBRC 100824 / MB4) (Thermoanaerobacter tengcongensis).